Here is a 135-residue protein sequence, read N- to C-terminus: MSKLNKTILADFEAAQIQRKLPEFNQGDTVVVNVKVKEGNRERVQAYEGVVIGTKNAGLNSSFTVRKISHGFGVERVFQTHSAIIDSVEVKRRGKVRAGKLYYLRGLEGKAARIKEDLAAAAQAKAARQAAAKVE.

This sequence belongs to the bacterial ribosomal protein bL19 family.

This protein is located at the 30S-50S ribosomal subunit interface and may play a role in the structure and function of the aminoacyl-tRNA binding site. The protein is Large ribosomal subunit protein bL19 of Xanthomonas euvesicatoria pv. vesicatoria (strain 85-10) (Xanthomonas campestris pv. vesicatoria).